The following is a 326-amino-acid chain: tRNA uridine(34) hydroxylase (326 aa).

Residues 122–218 (EENRCLVLDV…YGQAVGTGKW (97 aa)) form the Rhodanese domain. Catalysis depends on Cys178, which acts as the Cysteine persulfide intermediate.

This sequence belongs to the TrhO family.

The enzyme catalyses uridine(34) in tRNA + AH2 + O2 = 5-hydroxyuridine(34) in tRNA + A + H2O. In terms of biological role, catalyzes oxygen-dependent 5-hydroxyuridine (ho5U) modification at position 34 in tRNAs. The protein is tRNA uridine(34) hydroxylase of Chlamydia abortus (strain DSM 27085 / S26/3) (Chlamydophila abortus).